Here is a 403-residue protein sequence, read N- to C-terminus: MRKTVKRESEATGGKREADDEPEKLRSVKKEKQRKTEADSVRPDEPPPPQEEEQGISDRRILRSKYLSLQNEINDCKDDLMKIDSDKFSRIINAVENLHQQVRKPREQIADAEALLDIANTLMSSVKSQSAHGVSPAEFVNALISGFGQGSLGIDTDETAQVSLKWKDLGFAVCSTVLVSCGCSTMLGPMDTELKQRKRAPNRKRTKPGEGVRPDEVDDSQSEEKTDTDKNMTIMFNILGKKKRVQLENLVLNRRSFAQTVENLFALSFLAKDGRVEIIVDKSGSHFAMPRNAPDANVVMSGEVIYNHFVFRLDFKDWKLMSEMVPLGEELMPHRQTAVASSSCPAASAPASADFTQDTQTTPIRKLSRNRGLVVQEETVVEDTPDKEGDGTRRRCKRRLTSS.

Residues 1-45 (MRKTVKRESEATGGKREADDEPEKLRSVKKEKQRKTEADSVRPDE) are compositionally biased toward basic and acidic residues. 3 disordered regions span residues 1–57 (MRKT…QGIS), 194–226 (LKQR…EEKT), and 342–403 (SSCP…LTSS). A compositionally biased stretch (basic residues) spans 196 to 206 (QRKRAPNRKRT). Residues 342–353 (SSCPAASAPASA) are compositionally biased toward low complexity. The span at 354 to 363 (DFTQDTQTTP) shows a compositional bias: polar residues. The segment covering 384–393 (TPDKEGDGTR) has biased composition (basic and acidic residues). Over residues 394–403 (RRCKRRLTSS) the composition is skewed to basic residues.

Belongs to the NSE4 family. In terms of assembly, interacts with SMC5, SMC6A or SMC6B. The SMC5-SMC6 complex is composed of the SMC5 and SMC6 heterodimer attached via their hinge domain and from the non-SMC subunit NSE4A or NSE4B. Expressed in seedlings, rosette leaves and floral buds.

It localises to the nucleus. In terms of biological role, component of the SMC5-SMC6 complex, that promotes sister chromatid alignment after DNA damage and facilitates double-stranded DNA breaks (DSBs) repair via homologous recombination between sister chromatids. This is Non-structural maintenance of chromosomes element 4 homolog A (NSE4A) from Arabidopsis thaliana (Mouse-ear cress).